We begin with the raw amino-acid sequence, 263 residues long: Fibroblast growth factor 23 (263 aa).

Residues 1-23 form the signal peptide; that stretch reads MDVNRRIGVKDALLALLLALLQG. A disulfide bond links cysteine 103 and cysteine 121. Asparagine 124 carries N-linked (GlcNAc...) asparagine glycosylation. Residues 198-211 are compositionally biased toward basic and acidic residues; that stretch reads VGRAEEGSDSRALQ. The interval 198 to 263 is disordered; the sequence is VGRAEEGSDS…GSPRSSGTVG (66 aa). Positions 212–226 are enriched in acidic residues; that stretch reads EDDADLEVETEVEVG. A compositionally biased stretch (basic and acidic residues) spans 227–245; the sequence is DDGRNASRERLQAPSDHDP. Asparagine 231 is a glycosylation site (N-linked (GlcNAc...) asparagine). Residues 249–263 show a composition bias toward polar residues; sequence FSSNPGSPRSSGTVG.

It belongs to the heparin-binding growth factors family.

Its subcellular location is the secreted. The chain is Fibroblast growth factor 23 (fgf23) from Tetraodon nigroviridis (Spotted green pufferfish).